The following is a 565-amino-acid chain: Hemagglutinin-neuraminidase (565 aa).

Over 1–20 the chain is Intravirion; the sequence is MVAEDAPVRGTCRVLFRTTT. The chain crosses the membrane as a helical span at residues 21 to 41; sequence LIFLCTLLALSISILYESLII. Over 42–565 the chain is Virion surface; that stretch reads RKQIMSQAGS…VPFIRQVTLS (524 aa). Residues asparagine 110 and asparagine 139 are each glycosylated (N-linked (GlcNAc...) asparagine; by host). Intrachain disulfides connect cysteine 161–cysteine 185, cysteine 175–cysteine 236, and cysteine 227–cysteine 240. Positions 223 to 228 are involved in neuraminidase activity; sequence NRKSCS. Asparagine 267 is a glycosylation site (N-linked (GlcNAc...) asparagine; by host). Intrachain disulfides connect cysteine 333–cysteine 454, cysteine 365–cysteine 375, and cysteine 448–cysteine 458. Asparagine 504 carries N-linked (GlcNAc...) asparagine; by host glycosylation. An intrachain disulfide couples cysteine 528 to cysteine 539.

This sequence belongs to the paramyxoviruses hemagglutinin-neuraminidase family. In terms of assembly, homotetramer; composed of disulfide-linked homodimers. Interacts with F protein trimer.

It is found in the virion membrane. The protein resides in the host cell membrane. The enzyme catalyses Hydrolysis of alpha-(2-&gt;3)-, alpha-(2-&gt;6)-, alpha-(2-&gt;8)- glycosidic linkages of terminal sialic acid residues in oligosaccharides, glycoproteins, glycolipids, colominic acid and synthetic substrates.. Functionally, attaches the virus to sialic acid-containing cell receptors and thereby initiating infection. Binding of HN protein to the receptor induces a conformational change that allows the F protein to trigger virion/cell membranes fusion. In terms of biological role, neuraminidase activity ensures the efficient spread of the virus by dissociating the mature virions from the neuraminic acid containing glycoproteins. In Canis lupus familiaris (Dog), this protein is Hemagglutinin-neuraminidase (HN).